We begin with the raw amino-acid sequence, 427 residues long: Glutamyl-tRNA reductase (427 aa).

Substrate is bound by residues Thr-49 to Arg-52, Ser-109, Glu-114 to Gln-116, and Gln-120. Cys-50 functions as the Nucleophile in the catalytic mechanism. Gly-188–Ala-193 is an NADP(+) binding site.

It belongs to the glutamyl-tRNA reductase family. In terms of assembly, homodimer.

The catalysed reaction is (S)-4-amino-5-oxopentanoate + tRNA(Glu) + NADP(+) = L-glutamyl-tRNA(Glu) + NADPH + H(+). The protein operates within porphyrin-containing compound metabolism; protoporphyrin-IX biosynthesis; 5-aminolevulinate from L-glutamyl-tRNA(Glu): step 1/2. It functions in the pathway porphyrin-containing compound metabolism; chlorophyll biosynthesis. Its activity is regulated as follows. Feedback inhibition by heme. In terms of biological role, catalyzes the NADPH-dependent reduction of glutamyl-tRNA(Glu) to glutamate 1-semialdehyde (GSA). The protein is Glutamyl-tRNA reductase of Synechocystis sp. (strain ATCC 27184 / PCC 6803 / Kazusa).